The sequence spans 266 residues: MVKVTFNSALAQKEAKKXEPKSGEEALIIPPDTXAVDCKDPDEVVPVGQRRAWCWCMCFGLAFMLAGVILGGAYLYKYFALQPDDVYYCGIKYIKDDVILNEPPANAPAARYQTIEENIKIFEEDGVEFISVPVPEFADSDPANIVHDFNKKLTAYLDLNLDKCYVIPLNTSIVMPPRNLLELLINIKAGTYLPQSYLIHEHMVITDRIENIDHLGFYIYRLCHDKETYKLQRKETVKGIQKREASNCATIRHFENKFAVETLICS.

At 1 to 54 the chain is on the cytoplasmic side; the sequence is MVKVTFNSALAQKEAKKXEPKSGEEALIIPPDTXAVDCKDPDEVVPVGQRRAWC. Residues 55–75 traverse the membrane as a helical; Signal-anchor for type II membrane protein segment; that stretch reads WCMCFGLAFMLAGVILGGAYL. The Lumenal segment spans residues 76 to 266; sequence YKYFALQPDD…KFAVETLICS (191 aa). The segment at 102–134 is necessary for interaction with APP and inhibitor effects on APP processing; it reads EPPANAPAARYQTIEENIKIFEEDGVEFISVPV. A BRICHOS domain is found at 137-231; that stretch reads FADSDPANIV…LCHDKETYKL (95 aa). 2 disulfide bridges follow: cysteine 164–cysteine 223 and cysteine 248–cysteine 265. N-linked (GlcNAc...) asparagine glycosylation occurs at asparagine 170.

Belongs to the ITM2 family. As to quaternary structure, homodimer; disulfide-linked. Interacts with SPPL2A and SPPL2B. Interacts with APP. Mature BRI2 (mBRI2) interacts with the APP amyloid-beta A4 protein; the interaction occurs at the cell surface and in the endocytic compartments and enable alpha- and beta-secretase-induced APP cleavage inhibition. Mature BRI2 (mBRI2) interacts with the APP C99; the interaction occurs in the endocytic compartments and enable gamma-secretase-induced C99 cleavage inhibition. May form heterodimers with Bri23 peptide and APP amyloid-beta protein 40. Interacts with ADAM7 in sperm; the interaction increases following capacitation. The ectodomain C-terminal part of the imBRI2 is processed by furin producing a secreted Bri23 peptide and a mature BRI2, membrane form (mBRI2). The remaining part of the ectodomain of mBRI2 containing the BRICHOS domain is cleaved by ADAM10 and is secreted (BRI2C, soluble form). The membrane-bound N-terminal fragment (BRI2C, membrane form) is further proteolytically processed by SPPL2A and SPPL2B through regulated intramembrane proteolysis producing a secreted C-peptide and a BRI2 intracellular domain (BRI2 ICD) released in the cytosol. Shedding by ADAM10 facilitates intramembrane cleavage but is not absolutely required for BRI2 ICD generation. In terms of processing, glycosylation at Asn-170 is important for cell surface localization, but doesn't affect furin- and ADAM10-induced proteolytic processing.

It is found in the golgi apparatus membrane. The protein localises to the cell membrane. The protein resides in the endosome membrane. Its subcellular location is the secreted. Functionally, plays a regulatory role in the processing of the amyloid-beta A4 precursor protein (APP) and acts as an inhibitor of the amyloid-beta peptide aggregation and fibrils deposition. Plays a role in the induction of neurite outgrowth. Functions as a protease inhibitor by blocking access of secretases to APP cleavage sites. In terms of biological role, mature BRI2 (mBRI2) functions as a modulator of the amyloid-beta A4 precursor protein (APP) processing leading to a strong reduction in the secretion of secretase-processed amyloid-beta protein 40 and amyloid-beta protein 42. Its function is as follows. Bri23 peptide prevents aggregation of APP amyloid-beta protein 42 into toxic oligomers. This is Integral membrane protein 2B (ITM2B) from Sus scrofa (Pig).